The following is a 356-amino-acid chain: Homoserine O-acetyltransferase (356 aa).

In terms of domain architecture, AB hydrolase-1 spans 50-335 (NVILVCHALT…DEPYGHDAFL (286 aa)). Catalysis depends on Ser-146, which acts as the Nucleophile. Arg-215 serves as a coordination point for substrate. Active-site residues include Asp-302 and His-331. Asp-332 contacts substrate.

Belongs to the AB hydrolase superfamily. MetX family. As to quaternary structure, homodimer.

It localises to the cytoplasm. The catalysed reaction is L-homoserine + acetyl-CoA = O-acetyl-L-homoserine + CoA. Its pathway is amino-acid biosynthesis; L-methionine biosynthesis via de novo pathway; O-acetyl-L-homoserine from L-homoserine: step 1/1. Functionally, transfers an acetyl group from acetyl-CoA to L-homoserine, forming acetyl-L-homoserine. This is Homoserine O-acetyltransferase from Chlorobaculum tepidum (strain ATCC 49652 / DSM 12025 / NBRC 103806 / TLS) (Chlorobium tepidum).